Consider the following 56-residue polypeptide: Large ribosomal subunit protein bL33 (56 aa).

Belongs to the bacterial ribosomal protein bL33 family.

The polypeptide is Large ribosomal subunit protein bL33 (Campylobacter hominis (strain ATCC BAA-381 / DSM 21671 / CCUG 45161 / LMG 19568 / NCTC 13146 / CH001A)).